The primary structure comprises 25 residues: Antimicrobial peptide scolopin-2 (25 aa).

In terms of tissue distribution, expressed by the venom gland.

The protein resides in the secreted. Functionally, antimicrobial peptide against both Gram-positive, -negative and yeast. Also induces histamine release by mast cells and shows moderate hemolytic activities against both human and rabbit red cells. The protein is Antimicrobial peptide scolopin-2 of Scolopendra mutilans (Chinese red-headed centipede).